The following is a 276-amino-acid chain: Rhomboid protease GlpG (276 aa).

A run of 6 helical transmembrane segments spans residues 94 to 114, 142 to 162, 169 to 189, 192 to 212, 229 to 249, and 250 to 270; these read GPVT…MQIL, ALMH…WYLG, LGSG…GYVQ, FSGP…GYVW, LIIF…GMSM, and ANGA…VDSL. The active-site Nucleophile is the S201. Residue H254 is part of the active site.

The protein belongs to the peptidase S54 family.

It is found in the cell inner membrane. It catalyses the reaction Cleaves type-1 transmembrane domains using a catalytic dyad composed of serine and histidine that are contributed by different transmembrane domains.. Rhomboid-type serine protease that catalyzes intramembrane proteolysis. The chain is Rhomboid protease GlpG from Shigella flexneri serotype 5b (strain 8401).